We begin with the raw amino-acid sequence, 142 residues long: Small ribosomal subunit protein bS6 (142 aa).

Residues 110–133 (NKKPSHAKEKHEKTEHTHSHHAEE) show a composition bias toward basic and acidic residues. Residues 110–142 (NKKPSHAKEKHEKTEHTHSHHAEEAESVGSHSE) form a disordered region.

This sequence belongs to the bacterial ribosomal protein bS6 family.

Functionally, binds together with bS18 to 16S ribosomal RNA. The protein is Small ribosomal subunit protein bS6 of Helicobacter pylori (strain P12).